Here is a 21-residue protein sequence, read N- to C-terminus: Large ribosomal subunit protein uL30 (21 aa).

Residues 1-15 (AKTENKTVTVRQTAS) show a composition bias toward polar residues. Residues 1-21 (AKTENKTVTVRQTASPIXXXK) form a disordered region.

Belongs to the universal ribosomal protein uL30 family. In terms of assembly, part of the 50S ribosomal subunit.

This is Large ribosomal subunit protein uL30 (rpmD) from Brevundimonas diminuta (Pseudomonas diminuta).